The primary structure comprises 94 residues: Small ribosomal subunit protein uS19 (94 aa).

This sequence belongs to the universal ribosomal protein uS19 family.

Protein S19 forms a complex with S13 that binds strongly to the 16S ribosomal RNA. The protein is Small ribosomal subunit protein uS19 of Wolbachia pipientis subsp. Culex pipiens (strain wPip).